We begin with the raw amino-acid sequence, 352 residues long: Decapping nuclease din1 (352 aa).

Residues R33 and 93-95 (WRG) each bind substrate. E150 is an a divalent metal cation binding site. Residues C182 and E199 each coordinate substrate. Residue D201 participates in a divalent metal cation binding. S218 bears the Phosphoserine mark. Positions 239 and 240 each coordinate a divalent metal cation. 2 residues coordinate substrate: K241 and Q263.

Belongs to the DXO/Dom3Z family. Interacts with dhp1/Rat1; the interaction is direct, stabilizes dhp1 protein structure and stimulates its exoribonuclease activity. The interaction also stimulates din1 pyrophosphohydrolase activity, probably by recruiting it to mRNA substrates. The cofactor is a divalent metal cation.

The protein resides in the nucleus. It carries out the reaction a 5'-end NAD(+)-phospho-ribonucleoside in mRNA + H2O = a 5'-end phospho-ribonucleoside in mRNA + NAD(+) + H(+). The enzyme catalyses a 5'-end (N(7)-methyl 5'-triphosphoguanosine)-ribonucleoside-ribonucleotide in mRNA + H2O = a (N(7)-methyl 5'-triphosphoguanosine)-nucleoside + a 5'-end phospho-ribonucleoside in mRNA + H(+). It catalyses the reaction a 5'-end triphospho-ribonucleoside in mRNA + H2O = a 5'-end phospho-ribonucleoside in mRNA + diphosphate + H(+). Functionally, decapping enzyme for NAD-capped RNAs: specifically hydrolyzes the nicotinamide adenine dinucleotide (NAD) cap from a subset of RNAs by removing the entire NAD moiety from the 5'-end of an NAD-capped RNA. The NAD-cap is present at the 5'-end of some RNAs and snoRNAs. In contrast to the canonical 5'-end N7 methylguanosine (m7G) cap, the NAD cap promotes mRNA decay. Also acts as a non-canonical decapping enzyme that removes the entire cap structure of m7G capped or incompletely capped RNAs and mediates their subsequent degradation. Specifically degrades pre-mRNAs with a defective m7G cap and is part of a pre-mRNA capping quality control. Has decapping activity toward incomplete 5'-end m7G cap mRNAs such as unmethylated 5'-end-capped RNA (cap0), while it has no activity toward 2'-O-ribose methylated m7G cap (cap1). Also possesses RNA 5'-pyrophosphohydrolase activity by hydrolyzing the 5'-end triphosphate to release pyrophosphates. Stimulates exoribonuclease activity of dhp1, allowing it to degrade RNAs with stable secondary structure more effectively. The sequence is that of Decapping nuclease din1 from Schizosaccharomyces pombe (strain 972 / ATCC 24843) (Fission yeast).